The following is a 347-amino-acid chain: Cytoplasmic tRNA 2-thiolation protein 1 (347 aa).

S200 is modified (phosphoserine). A disordered region spans residues 315–347; sequence LAIGKGRRGLDEEGPPREPQPSRPLTSEPVPDF.

It belongs to the TtcA family. CTU1/NCS6/ATPBD3 subfamily. Component of a complex at least composed of URM1, CTU2/NCS2 and CTU1/ATPBD3. May form a heterodimer with CTU2/NCS2.

The protein localises to the cytoplasm. Its pathway is tRNA modification; 5-methoxycarbonylmethyl-2-thiouridine-tRNA biosynthesis. Plays a central role in 2-thiolation of mcm(5)S(2)U at tRNA wobble positions of tRNA(Lys), tRNA(Glu) and tRNA(Gln). Directly binds tRNAs and probably acts by catalyzing adenylation of tRNAs, an intermediate required for 2-thiolation. It is unclear whether it acts as a sulfurtransferase that transfers sulfur from thiocarboxylated URM1 onto the uridine of tRNAs at wobble position. In Bos taurus (Bovine), this protein is Cytoplasmic tRNA 2-thiolation protein 1.